The primary structure comprises 242 residues: Small ribosomal subunit protein uS3 (242 aa).

Positions 39–110 constitute a KH type-2 domain; it reads IRRFIHKKYG…QVRINVVEVE (72 aa). The segment at 216–242 is disordered; sequence QSMPVGASPRRRGNRRPQQFEDRSNEG. Residues 233-242 are compositionally biased toward basic and acidic residues; sequence QQFEDRSNEG.

This sequence belongs to the universal ribosomal protein uS3 family. Part of the 30S ribosomal subunit. Forms a tight complex with proteins S10 and S14.

Binds the lower part of the 30S subunit head. Binds mRNA in the 70S ribosome, positioning it for translation. This is Small ribosomal subunit protein uS3 from Prochlorococcus marinus (strain MIT 9303).